The sequence spans 100 residues: Large ribosomal subunit protein uL23 (100 aa).

Belongs to the universal ribosomal protein uL23 family. In terms of assembly, part of the 50S ribosomal subunit. Contacts protein L29, and trigger factor when it is bound to the ribosome.

One of the early assembly proteins it binds 23S rRNA. One of the proteins that surrounds the polypeptide exit tunnel on the outside of the ribosome. Forms the main docking site for trigger factor binding to the ribosome. This is Large ribosomal subunit protein uL23 from Aggregatibacter actinomycetemcomitans (Actinobacillus actinomycetemcomitans).